Here is a 914-residue protein sequence, read N- to C-terminus: Alanine--tRNA ligase (914 aa).

4 residues coordinate Zn(2+): histidine 613, histidine 617, cysteine 717, and histidine 721.

This sequence belongs to the class-II aminoacyl-tRNA synthetase family. The cofactor is Zn(2+).

It localises to the cytoplasm. The enzyme catalyses tRNA(Ala) + L-alanine + ATP = L-alanyl-tRNA(Ala) + AMP + diphosphate. In terms of biological role, catalyzes the attachment of alanine to tRNA(Ala) in a two-step reaction: alanine is first activated by ATP to form Ala-AMP and then transferred to the acceptor end of tRNA(Ala). Also edits incorrectly charged Ser-tRNA(Ala) and Gly-tRNA(Ala) via its editing domain. This Pyrococcus abyssi (strain GE5 / Orsay) protein is Alanine--tRNA ligase.